Reading from the N-terminus, the 408-residue chain is LL-diaminopimelate aminotransferase (408 aa).

Residues Tyr15 and Gly42 each contribute to the substrate site. Residues Tyr72, Ser108 to Lys109, Tyr132, Asn187, Tyr218, and Ser246 to Ser248 each bind pyridoxal 5'-phosphate. Lys109, Tyr132, and Asn187 together coordinate substrate. Lys249 bears the N6-(pyridoxal phosphate)lysine mark. Residues Arg257 and Asn292 each coordinate pyridoxal 5'-phosphate. Residues Asn292 and Arg388 each coordinate substrate.

This sequence belongs to the class-I pyridoxal-phosphate-dependent aminotransferase family. LL-diaminopimelate aminotransferase subfamily. In terms of assembly, homodimer. The cofactor is pyridoxal 5'-phosphate.

The enzyme catalyses (2S,6S)-2,6-diaminopimelate + 2-oxoglutarate = (S)-2,3,4,5-tetrahydrodipicolinate + L-glutamate + H2O + H(+). The protein operates within amino-acid biosynthesis; L-lysine biosynthesis via DAP pathway; LL-2,6-diaminopimelate from (S)-tetrahydrodipicolinate (aminotransferase route): step 1/1. Its function is as follows. Involved in the synthesis of meso-diaminopimelate (m-DAP or DL-DAP), required for both lysine and peptidoglycan biosynthesis. Catalyzes the direct conversion of tetrahydrodipicolinate to LL-diaminopimelate. This chain is LL-diaminopimelate aminotransferase, found in Leptospira borgpetersenii serovar Hardjo-bovis (strain JB197).